The chain runs to 570 residues: Structure-specific endonuclease subunit EME1 (570 aa).

The segment covering 1 to 12 (MALKKSSPSLDS) has biased composition (low complexity). Positions 1 to 42 (MALKKSSPSLDSGDSDSEELPTFAFLKKEPSSTKRRQPEREE) are disordered. 2 positions are modified to phosphoserine: serine 12 and serine 15. Over residues 26 to 42 (LKKEPSSTKRRQPEREE) the composition is skewed to basic and acidic residues. Phosphoserine occurs at positions 84, 85, and 87. Residue lysine 103 forms a Glycyl lysine isopeptide (Lys-Gly) (interchain with G-Cter in SUMO2) linkage. Phosphoserine is present on residues serine 111 and serine 117. Glycyl lysine isopeptide (Lys-Gly) (interchain with G-Cter in SUMO2) cross-links involve residues lysine 136 and lysine 141. Phosphothreonine is present on threonine 150. 2 disordered regions span residues 187 to 233 (KTNS…ERKN) and 372 to 400 (AQNPPRRGKQGANKQTKKQQQRQPEASIG). Basic and acidic residues predominate over residues 220–233 (RQKESTLRRQERKN). The tract at residues 250–456 (KHIIVVLDPV…PFKKLRDETT (207 aa)) is nuclease-like domain; forms the post-nick DNA binding interface and is involved in DNA recognition and bending. Residues 476 to 570 (RGLALVWRRQ…QPHLSLDSAD (95 aa)) form a helix-hairpin-helix (2HhH); forms the pre-nick DNA binding interface and is involved in DNA recognition and bending region.

The protein belongs to the EME1/MMS4 family. As to quaternary structure, part of the heterodimeric MUS81-EME1 complex.

The protein resides in the nucleus. The protein localises to the nucleolus. Non-catalytic subunit of the structure-specific, heterodimeric DNA endonuclease MUS81-EME1 which is involved in the maintenance of genome stability. In the complex, EME1 is required for DNA cleavage, participating in DNA recognition and bending. MUS81-EME1 cleaves 3'-flaps and nicked Holliday junctions, and exhibit limited endonuclease activity with 5' flaps and nicked double-stranded DNAs. Active during prometaphase, MUS81-EME1 resolves mitotic recombination intermediates, including Holliday junctions, which form during homologous recombination. This is Structure-specific endonuclease subunit EME1 from Homo sapiens (Human).